A 517-amino-acid polypeptide reads, in one-letter code: Arp2/3 complex-activating protein rickA (517 aa).

2 disordered regions span residues 313-441 (LENN…SKPA) and 461-517 (KVSD…SFVR). Pro residues-rich tracts occupy residues 319 to 340 (PPSP…PSPL) and 347 to 378 (SSPP…PPMA). In terms of domain architecture, WH2 spans 406-423 (DTSDLMREIAGPKKLKKV). Positions 444–477 (VNALSGLESIFARRAVIKVSDSSSSESDSGNWSD) are central and acidic domains. Low complexity predominate over residues 463-479 (SDSSSSESDSGNWSDVS). Polar residues predominate over residues 500–517 (THAQKINNRNSQNPSFVR).

Homodimer.

Its subcellular location is the cell surface. Functionally, recruits and activates the Arp2/3 complex, which in turn leads to actin polymerization, promoting Rickettsia motility during infection. The polypeptide is Arp2/3 complex-activating protein rickA (rickA) (Rickettsia conorii (strain ATCC VR-613 / Malish 7)).